Consider the following 297-residue polypeptide: uncharacterized protein (297 aa).

Positions 128–156 form a coiled coil; sequence RGVIVEQESEAAAEKDELESLAKVLESDF.

This is an uncharacterized protein from Bacillus subtilis (strain 168).